Here is a 139-residue protein sequence, read N- to C-terminus: Putative pre-16S rRNA nuclease (139 aa).

The protein belongs to the YqgF nuclease family.

The protein resides in the cytoplasm. Its function is as follows. Could be a nuclease involved in processing of the 5'-end of pre-16S rRNA. The sequence is that of Putative pre-16S rRNA nuclease from Streptococcus pneumoniae (strain JJA).